The primary structure comprises 208 residues: Putative thymidylate kinase (208 aa).

Residues 12-19 (GIDGTGTS) form a defective ATP-binding region.

It belongs to the thymidylate kinase family.

It carries out the reaction dTMP + ATP = dTDP + ADP. The chain is Putative thymidylate kinase (tmk) from Treponema pallidum (strain Nichols).